We begin with the raw amino-acid sequence, 100 residues long: uncharacterized protein (100 aa).

2 helical membrane passes run Ile17 to Phe37 and Met78 to Phe98.

The protein localises to the endoplasmic reticulum membrane. This is an uncharacterized protein from Saccharomyces cerevisiae (strain ATCC 204508 / S288c) (Baker's yeast).